Here is a 128-residue protein sequence, read N- to C-terminus: uncharacterized protein (128 aa).

This is an uncharacterized protein from Mycoplasma pneumoniae (strain ATCC 29342 / M129 / Subtype 1) (Mycoplasmoides pneumoniae).